The following is a 201-amino-acid chain: GTP-binding protein ryh1 (201 aa).

Glycine 18–threonine 25 is a GTP binding site. The short motif at tyrosine 40–phenylalanine 48 is the Effector region element. Residues aspartate 66–glutamine 70 and asparagine 124–aspartate 127 each bind GTP. S-geranylgeranyl cysteine attachment occurs at residues cysteine 199 and cysteine 201. Position 201 is a cysteine methyl ester (cysteine 201).

Belongs to the small GTPase superfamily. Rab family.

It localises to the endosome membrane. Its subcellular location is the golgi apparatus membrane. It is found in the nucleus. The protein localises to the cytoplasm. The protein resides in the cytosol. In terms of biological role, has a role in retrograde traffricking of proteins from the endosome to the Golgi. Involved in protein transport to the plasma membrane. Involved in the secretory pathway where it has a role in acid phosphatase secretion. Required also in normal glycosylation trafficking pathways. This Schizosaccharomyces pombe (strain 972 / ATCC 24843) (Fission yeast) protein is GTP-binding protein ryh1 (ryh1).